The primary structure comprises 190 residues: Heme-binding protein 1 (190 aa).

It belongs to the HEBP family. Monomer. In terms of tissue distribution, ubiquitously expressed. Extremely abundant in liver.

Its subcellular location is the cytoplasm. May bind free porphyrinogens that may be present in the cell and thus facilitate removal of these potentially toxic compound. Binds with a high affinity to one molecule of heme or porphyrins. It binds metalloporphyrins, free porphyrins and N-methylprotoporphyrin with similar affinities. This chain is Heme-binding protein 1 (Hebp1), found in Mus musculus (Mouse).